Consider the following 248-residue polypeptide: Non-specific acid phosphatase (248 aa).

Residues methionine 1–alanine 20 form the signal peptide.

This sequence belongs to the class A bacterial acid phosphatase family.

Its subcellular location is the periplasm. It catalyses the reaction a phosphate monoester + H2O = an alcohol + phosphate. The polypeptide is Non-specific acid phosphatase (phoN) (Providencia stuartii).